A 98-amino-acid chain; its full sequence is Cell division protein FtsB (98 aa).

The Cytoplasmic segment spans residues 1–3; that stretch reads MKR. Residues 4–21 traverse the membrane as a helical segment; sequence LLFVLIALLAMLQYRLWL. Residues 22–98 are Periplasmic-facing; it reads GDKSLADSFH…GGERGGVPEN (77 aa). Residues 31 to 74 are a coiled coil; sequence HLQEQIKLQQQSNAQLVARNQVLREEISDLRSGTEALEERARNE.

Belongs to the FtsB family. In terms of assembly, part of a complex composed of FtsB, FtsL and FtsQ.

The protein resides in the cell inner membrane. Functionally, essential cell division protein. May link together the upstream cell division proteins, which are predominantly cytoplasmic, with the downstream cell division proteins, which are predominantly periplasmic. The polypeptide is Cell division protein FtsB (Shewanella pealeana (strain ATCC 700345 / ANG-SQ1)).